The chain runs to 73 residues: Ocellatin-PT8 (73 aa).

Positions 1 to 22 are cleaved as a signal peptide; the sequence is MAFLKKSLFLVLFLGLVSLSIC. The propeptide occupies 23–39; it reads DEEKRQDEDDDDDDDEE.

In terms of tissue distribution, expressed by the skin glands.

Its subcellular location is the secreted. Functionally, has antibacterial activity against Gram-negative bacteria E.coli ATCC 25922 (MIC=60 uM), K.pneumoniae ATCC 700603 (MIC=240 uM) and S.choleraesuis ATCC 14028 (MIC=240 uM) and against Gram-positive bacterium S.aureus ATCC 29313 (MIC=240 uM). Shows no hemolytic activity and no cytotoxicity. This is Ocellatin-PT8 from Leptodactylus pustulatus (Ceara white-lipped frog).